The following is a 152-amino-acid chain: Protein SprT-like (152 aa).

The region spanning 7–148 is the SprT-like domain; that stretch reads QRLVEEVSLQ…GKCKGKLNLI (142 aa). His67 contributes to the Zn(2+) binding site. The active site involves Glu68. His71 contributes to the Zn(2+) binding site.

It belongs to the SprT family. Zn(2+) is required as a cofactor.

The protein resides in the cytoplasm. This is Protein SprT-like from Bacillus cereus (strain 03BB102).